The sequence spans 31 residues: LysM-domain containing protein (31 aa).

The stretch at 1–28 is one LysM 1 repeat; the sequence is YSPSLTDLQSYNAMNGPALKAGDILAVP.

The sequence is that of LysM-domain containing protein from Jatropha curcas (Barbados nut).